The sequence spans 1081 residues: Disheveled-associated activator of morphogenesis 1-A (1081 aa).

Residues 45–418 (LPVPPVEELD…QIVIQNEKGQ (374 aa)) form the GBD/FH3 domain. 2 disordered regions span residues 455–476 (KEHN…AKTQ) and 519–615 (RTVC…PLKS). Residues 526–536 (PGGPPPPPGAP) are compositionally biased toward pro residues. The span at 538 to 547 (GPMSMPSGNF) shows a compositional bias: low complexity. The span at 548 to 585 (MPPPPPPPPPFPGGMAPPPPPPPPPPPPPGGPPPPPGL) shows a compositional bias: pro residues. Over residues 586-600 (PLLGAAPPGAPLGLS) the composition is skewed to low complexity. The FH2 domain occupies 603–1012 (KKNIPQPKNP…EERRIRMEAQ (410 aa)). The actin-binding stretch occupies residues 696 to 705 (AQNCNILLSR). A compositionally biased stretch (basic and acidic residues) spans 1013–1029 (LKEQRERERKARKAKEN). Disordered stretches follow at residues 1013–1038 (LKEQ…EFDD) and 1060–1081 (RKRI…KLNY). The DAD domain maps to 1030-1061 (GEEEGEFDDLVSALRSGEVFDKDLSKLKRNRK). The span at 1070-1081 (SSRERPVTKLNY) shows a compositional bias: basic and acidic residues.

The protein localises to the cytoplasm. It is found in the cytoskeleton. It localises to the cilium basal body. In terms of biological role, binds to disheveled (dsh) and Rho, and mediates Wnt-induced dsh-Rho complex formation during gastrulation. May play a role as a scaffolding protein to recruit Rho-GDP and Rho-GEF, thereby enhancing Rho-GTP formation. Can direct nucleation and elongation of new actin filaments. Involved in building functional cilia. Involved in building functional cilia. Involved in the organization of the subapical actin network in multiciliated epithelial cells. This chain is Disheveled-associated activator of morphogenesis 1-A (daam1-a), found in Xenopus laevis (African clawed frog).